A 100-amino-acid chain; its full sequence is DNA-directed RNA polymerase subunit Rpo11 (100 aa).

This sequence belongs to the archaeal Rpo11/eukaryotic RPB11/RPC19 RNA polymerase subunit family. As to quaternary structure, part of the RNA polymerase complex.

The protein localises to the cytoplasm. The catalysed reaction is RNA(n) + a ribonucleoside 5'-triphosphate = RNA(n+1) + diphosphate. In terms of biological role, DNA-dependent RNA polymerase (RNAP) catalyzes the transcription of DNA into RNA using the four ribonucleoside triphosphates as substrates. In Picrophilus torridus (strain ATCC 700027 / DSM 9790 / JCM 10055 / NBRC 100828 / KAW 2/3), this protein is DNA-directed RNA polymerase subunit Rpo11.